Here is a 477-residue protein sequence, read N- to C-terminus: Zinc finger C3HC-type protein 1-like (477 aa).

A C3HC-type zinc finger spans residues 95 to 149 (CAKYGWCNIECDMLKCSSCNAYLCASLQPILDFSKYKQRCVELQEALRKAHEKFC). The segment at 287 to 392 (SLSAPGTPVS…SSSSDTSPRS (106 aa)) is disordered. Residues 354 to 363 (SMGQGENTGL) show a composition bias toward polar residues. The span at 370–379 (SPHRRAKRPR) shows a compositional bias: basic residues. Over residues 382 to 392 (SSSSSDTSPRS) the composition is skewed to low complexity.

In terms of processing, phosphorylated. May also be weakly phosphorylated on Tyr residues.

It localises to the nucleus. The protein localises to the nucleus envelope. Required for proper positioning of a substantial amount of TPR at the nuclear basket (NB) through interaction with TPR. The protein is Zinc finger C3HC-type protein 1-like (zc3hc1) of Xenopus laevis (African clawed frog).